The following is a 105-amino-acid chain: NADH-quinone oxidoreductase subunit K (105 aa).

The next 3 helical transmembrane spans lie at 8–28 (LAAYLILGAMLFSIGVVGVFL), 34–54 (IILLMAIELLLLAVNINLVAF), and 65–85 (VFVFFILTVAAAEAAIGLAIL).

The protein belongs to the complex I subunit 4L family. In terms of assembly, NDH-1 is composed of 14 different subunits. Subunits NuoA, H, J, K, L, M, N constitute the membrane sector of the complex.

It is found in the cell inner membrane. The catalysed reaction is a quinone + NADH + 5 H(+)(in) = a quinol + NAD(+) + 4 H(+)(out). In terms of biological role, NDH-1 shuttles electrons from NADH, via FMN and iron-sulfur (Fe-S) centers, to quinones in the respiratory chain. The immediate electron acceptor for the enzyme in this species is believed to be ubiquinone. Couples the redox reaction to proton translocation (for every two electrons transferred, four hydrogen ions are translocated across the cytoplasmic membrane), and thus conserves the redox energy in a proton gradient. The polypeptide is NADH-quinone oxidoreductase subunit K (Acidithiobacillus ferrooxidans (strain ATCC 23270 / DSM 14882 / CIP 104768 / NCIMB 8455) (Ferrobacillus ferrooxidans (strain ATCC 23270))).